Consider the following 437-residue polypeptide: Enolase 1 (437 aa).

Residue lysine 60 forms a Glycyl lysine isopeptide (Lys-Gly) (interchain with G-Cter in ubiquitin) linkage. Residues serine 119 and serine 138 each carry the phosphoserine modification. Residues histidine 160 and glutamate 169 each coordinate substrate. A Phosphoserine modification is found at serine 188. Residue glutamate 212 is the Proton donor of the active site. Residue lysine 243 forms a Glycyl lysine isopeptide (Lys-Gly) (interchain with G-Cter in ubiquitin) linkage. The Mg(2+) site is built by aspartate 247 and glutamate 296. Glutamate 296 is a substrate binding site. Threonine 313 carries the post-translational modification Phosphothreonine. Residue aspartate 321 coordinates substrate. Aspartate 321 serves as a coordination point for Mg(2+). The residue at position 324 (threonine 324) is a Phosphothreonine. Lysine 346 serves as the catalytic Proton acceptor. Lysine 358 participates in a covalent cross-link: Glycyl lysine isopeptide (Lys-Gly) (interchain with G-Cter in ubiquitin). Substrate contacts are provided by residues 373–376 and lysine 397; that span reads SHRS.

The protein belongs to the enolase family. As to quaternary structure, homodimer. Mg(2+) is required as a cofactor.

It localises to the cytoplasm. It catalyses the reaction (2R)-2-phosphoglycerate = phosphoenolpyruvate + H2O. Its pathway is carbohydrate degradation; glycolysis; pyruvate from D-glyceraldehyde 3-phosphate: step 4/5. This chain is Enolase 1 (ENO1), found in Saccharomyces cerevisiae (strain ATCC 204508 / S288c) (Baker's yeast).